The primary structure comprises 279 residues: Energy-coupling factor transporter ATP-binding protein EcfA1 (279 aa).

In terms of domain architecture, ABC transporter spans Ile5–Asp240. ATP is bound at residue Gly40 to Ser47.

This sequence belongs to the ABC transporter superfamily. Energy-coupling factor EcfA family. As to quaternary structure, forms a stable energy-coupling factor (ECF) transporter complex composed of 2 membrane-embedded substrate-binding proteins (S component), 2 ATP-binding proteins (A component) and 2 transmembrane proteins (T component).

Its subcellular location is the cell membrane. Its function is as follows. ATP-binding (A) component of a common energy-coupling factor (ECF) ABC-transporter complex. Unlike classic ABC transporters this ECF transporter provides the energy necessary to transport a number of different substrates. The protein is Energy-coupling factor transporter ATP-binding protein EcfA1 of Streptococcus agalactiae serotype Ia (strain ATCC 27591 / A909 / CDC SS700).